The chain runs to 400 residues: Acetylornithine aminotransferase (400 aa).

Pyridoxal 5'-phosphate-binding positions include 106-107 (GA) and Phe132. Position 135 (Arg135) interacts with N(2)-acetyl-L-ornithine. 217-220 (DEVQ) is a binding site for pyridoxal 5'-phosphate. Residue Lys246 is modified to N6-(pyridoxal phosphate)lysine. Residue Ser274 coordinates N(2)-acetyl-L-ornithine. Thr275 is a pyridoxal 5'-phosphate binding site.

The protein belongs to the class-III pyridoxal-phosphate-dependent aminotransferase family. ArgD subfamily. As to quaternary structure, homodimer. Pyridoxal 5'-phosphate is required as a cofactor.

The protein localises to the cytoplasm. The enzyme catalyses N(2)-acetyl-L-ornithine + 2-oxoglutarate = N-acetyl-L-glutamate 5-semialdehyde + L-glutamate. It participates in amino-acid biosynthesis; L-arginine biosynthesis; N(2)-acetyl-L-ornithine from L-glutamate: step 4/4. The chain is Acetylornithine aminotransferase from Streptomyces clavuligerus.